Here is a 118-residue protein sequence, read N- to C-terminus: Basic phospholipase A2 acanthin-2 (118 aa).

Intrachain disulfides connect cysteine 11-cysteine 71, cysteine 27-cysteine 117, cysteine 29-cysteine 45, cysteine 44-cysteine 98, cysteine 51-cysteine 91, cysteine 60-cysteine 84, and cysteine 78-cysteine 89. Residues tyrosine 28, glycine 30, and glycine 32 each contribute to the Ca(2+) site. Histidine 48 is an active-site residue. Aspartate 49 is a binding site for Ca(2+). The active site involves aspartate 92.

Requires Ca(2+) as cofactor. As to expression, expressed by the venom gland.

Its subcellular location is the secreted. The catalysed reaction is a 1,2-diacyl-sn-glycero-3-phosphocholine + H2O = a 1-acyl-sn-glycero-3-phosphocholine + a fatty acid + H(+). Functionally, snake venom phospholipase A2 (PLA2) that potently inhibits ADP-(IC(50)=12 nM) and collagen-induced (IC(50)=4 nM) platelet aggregation when tested on human whole blood. PLA2 catalyzes the calcium-dependent hydrolysis of the 2-acyl groups in 3-sn-phosphoglycerides. The chain is Basic phospholipase A2 acanthin-2 from Acanthophis antarcticus (Common death adder).